The following is a 247-amino-acid chain: 1-(5-phosphoribosyl)-5-[(5-phosphoribosylamino)methylideneamino] imidazole-4-carboxamide isomerase (247 aa).

Residue aspartate 8 is the Proton acceptor of the active site. The active-site Proton donor is the aspartate 130.

Belongs to the HisA/HisF family.

The protein resides in the cytoplasm. The enzyme catalyses 1-(5-phospho-beta-D-ribosyl)-5-[(5-phospho-beta-D-ribosylamino)methylideneamino]imidazole-4-carboxamide = 5-[(5-phospho-1-deoxy-D-ribulos-1-ylimino)methylamino]-1-(5-phospho-beta-D-ribosyl)imidazole-4-carboxamide. Its pathway is amino-acid biosynthesis; L-histidine biosynthesis; L-histidine from 5-phospho-alpha-D-ribose 1-diphosphate: step 4/9. This is 1-(5-phosphoribosyl)-5-[(5-phosphoribosylamino)methylideneamino] imidazole-4-carboxamide isomerase from Leptospira biflexa serovar Patoc (strain Patoc 1 / Ames).